The primary structure comprises 444 residues: tRNA modification GTPase MnmE (444 aa).

Positions 25, 83, and 122 each coordinate (6S)-5-formyl-5,6,7,8-tetrahydrofolate. The 153-residue stretch at 218–370 (GFKVAIVGKP…IVGRLRDYLD (153 aa)) folds into the TrmE-type G domain. GTP contacts are provided by residues 228–233 (NVGKSS), 247–253 (SDEAGTT), and 272–275 (DTAG). Residues serine 232 and threonine 253 each coordinate Mg(2+). (6S)-5-formyl-5,6,7,8-tetrahydrofolate is bound at residue lysine 444.

This sequence belongs to the TRAFAC class TrmE-Era-EngA-EngB-Septin-like GTPase superfamily. TrmE GTPase family. In terms of assembly, homodimer. Heterotetramer of two MnmE and two MnmG subunits. It depends on K(+) as a cofactor.

It is found in the cytoplasm. Exhibits a very high intrinsic GTPase hydrolysis rate. Involved in the addition of a carboxymethylaminomethyl (cmnm) group at the wobble position (U34) of certain tRNAs, forming tRNA-cmnm(5)s(2)U34. The polypeptide is tRNA modification GTPase MnmE (Campylobacter curvus (strain 525.92)).